Consider the following 197-residue polypeptide: Cell division protein SepF (197 aa).

2 disordered regions span residues 38–72 (MPTPLPEESAPAPRRLPENPTVASNFAMNSNTTPT) and 164–197 (LSREETPATPAAPARPAAPAPAWSDEMTPMAQAQ). The span at 58 to 72 (TVASNFAMNSNTTPT) shows a compositional bias: polar residues. Positions 170–185 (PATPAAPARPAAPAPA) are enriched in low complexity.

It belongs to the SepF family. As to quaternary structure, homodimer. Interacts with FtsZ.

It is found in the cytoplasm. Functionally, cell division protein that is part of the divisome complex and is recruited early to the Z-ring. Probably stimulates Z-ring formation, perhaps through the cross-linking of FtsZ protofilaments. Its function overlaps with FtsA. This is Cell division protein SepF from Picosynechococcus sp. (strain ATCC 27264 / PCC 7002 / PR-6) (Agmenellum quadruplicatum).